Reading from the N-terminus, the 124-residue chain is Histone H2A (124 aa).

The span at 1-18 (MSGRGKGGKAKGKSKSRS) shows a compositional bias: basic residues. Residues 1–23 (MSGRGKGGKAKGKSKSRSSRAGL) form a disordered region. The residue at position 2 (Ser-2) is an N-acetylserine. Ser-2 bears the Phosphoserine mark. Gln-104 bears the N5-methylglutamine mark.

The protein belongs to the histone H2A family. As to quaternary structure, the nucleosome is a histone octamer containing two molecules each of H2A, H2B, H3 and H4 assembled in one H3-H4 heterotetramer and two H2A-H2B heterodimers. The octamer wraps approximately 147 bp of DNA. Post-translationally, the N-terminal serine is acetylated. That serine is also phosphorylated in approximately 60% of the molecules isolated from erythrocytes.

The protein localises to the nucleus. It localises to the chromosome. Functionally, core component of nucleosome. Nucleosomes wrap and compact DNA into chromatin, limiting DNA accessibility to the cellular machineries which require DNA as a template. Histones thereby play a central role in transcription regulation, DNA repair, DNA replication and chromosomal stability. DNA accessibility is regulated via a complex set of post-translational modifications of histones, also called histone code, and nucleosome remodeling. The sequence is that of Histone H2A from Sipunculus nudus (Sipunculan worm).